A 292-amino-acid polypeptide reads, in one-letter code: MSWIERILAKPKINKRRGVPEGVWSKCTACGNIIYKADLERSLNVCPKCDHHMRVTGRSRLDIFLDKDNREEIGTDLEPKDVLRFKDSKKYKDRIAAAQKSTGENDALIAEKGTVKGVPLVAVAFDFNFMGGSMASVVGAKFVLAAEVCLKHRIPLVCFSASGGARMQEALMSLMQMAKTSAALARMSEEGLPFISILTDPTMGGVSASLAMLGDIHIAEPKALIGFAGPRVIEQTVRQTLPEGFQRAEFLLEHGAIDMITDRRDMRDTVARLLAKMQNLPSTEATEVSVNE.

Residues 23-292 (VWSKCTACGN…TEATEVSVNE (270 aa)) enclose the CoA carboxyltransferase N-terminal domain. The Zn(2+) site is built by cysteine 27, cysteine 30, cysteine 46, and cysteine 49. The segment at 27–49 (CTACGNIIYKADLERSLNVCPKC) adopts a C4-type zinc-finger fold.

Belongs to the AccD/PCCB family. In terms of assembly, acetyl-CoA carboxylase is a heterohexamer composed of biotin carboxyl carrier protein (AccB), biotin carboxylase (AccC) and two subunits each of ACCase subunit alpha (AccA) and ACCase subunit beta (AccD). The cofactor is Zn(2+).

The protein resides in the cytoplasm. The catalysed reaction is N(6)-carboxybiotinyl-L-lysyl-[protein] + acetyl-CoA = N(6)-biotinyl-L-lysyl-[protein] + malonyl-CoA. Its pathway is lipid metabolism; malonyl-CoA biosynthesis; malonyl-CoA from acetyl-CoA: step 1/1. Its function is as follows. Component of the acetyl coenzyme A carboxylase (ACC) complex. Biotin carboxylase (BC) catalyzes the carboxylation of biotin on its carrier protein (BCCP) and then the CO(2) group is transferred by the transcarboxylase to acetyl-CoA to form malonyl-CoA. The sequence is that of Acetyl-coenzyme A carboxylase carboxyl transferase subunit beta from Idiomarina loihiensis (strain ATCC BAA-735 / DSM 15497 / L2-TR).